Reading from the N-terminus, the 621-residue chain is Alpha-actinin-like protein 1 (621 aa).

Calponin-homology (CH) domains follow at residues 8–114 (SVQN…LRFT) and 123–230 (LTAK…HAFS). Residues 86–110 (LTNIGPADIVDGNLKLILGLIWTLI) form an actin-binding region. EF-hand domains follow at residues 388 to 419 (LSTI…LGPL), 487 to 549 (DGIT…EIVM), and 550 to 618 (EELE…AEDK).

Belongs to the alpha-actinin family.

The protein resides in the cytoplasm. It is found in the cytoskeleton. Binds to actin and is involved in actin-ring formation and organization. Plays a role in cytokinesis and is involved in septation. This Schizosaccharomyces pombe (strain 972 / ATCC 24843) (Fission yeast) protein is Alpha-actinin-like protein 1 (ain1).